The chain runs to 125 residues: uncharacterized protein (125 aa).

2 helical membrane-spanning segments follow: residues 22-44 (TPLM…NAAV) and 54-73 (YMGI…SVLM).

It belongs to the bacteriophage holin family. Cp-1 holin subfamily.

The protein resides in the cell membrane. This is an uncharacterized protein from Clostridium acetobutylicum (strain ATCC 824 / DSM 792 / JCM 1419 / IAM 19013 / LMG 5710 / NBRC 13948 / NRRL B-527 / VKM B-1787 / 2291 / W).